A 173-amino-acid chain; its full sequence is Small ribosomal subunit protein uS5 (173 aa).

Residues 17 to 80 enclose the S5 DRBM domain; it reads WQERVIQIRR…SDAKKHVVDV (64 aa).

Belongs to the universal ribosomal protein uS5 family. As to quaternary structure, part of the 30S ribosomal subunit. Contacts proteins S4 and S8.

Its function is as follows. With S4 and S12 plays an important role in translational accuracy. Located at the back of the 30S subunit body where it stabilizes the conformation of the head with respect to the body. This is Small ribosomal subunit protein uS5 from Picosynechococcus sp. (strain ATCC 27264 / PCC 7002 / PR-6) (Agmenellum quadruplicatum).